A 210-amino-acid chain; its full sequence is MQTRKVYLYVFHTMSDWEYGYLIAELNSGRYFKQDAASLKVVTVGVNKEMITTLGGLSIKPDISLDECTLGSQDLIILPGGNTWGEDIHQPILKKVGDALKLGTTIAAICGATLGLANEGYLNSRKHTSNDLDYMNMVCPNYKGETFYEKGPAVSDENLVTASGIAPLEFAVEVLKKLDVFAPDTLRSWYKLNKTQKPEYFFELMNTINR.

The PfpI endopeptidase domain maps to 4-180; it reads RKVYLYVFHT…AVEVLKKLDV (177 aa). The active-site Nucleophile is the Cys110.

It belongs to the peptidase C56 family.

This is an uncharacterized protein from Bacillus subtilis (strain 168).